We begin with the raw amino-acid sequence, 475 residues long: Probable 5'-adenylylsulfate reductase 1, chloroplastic (475 aa).

Residues 1–63 constitute a chloroplast transit peptide; that stretch reads MASATASISS…AAEPARQPVS (63 aa). The segment at 72–327 is reductase domain; it reads AAPVAEDAAA…KAKECGLHKG (256 aa). The 135-residue stretch at 341–475 folds into the Thioredoxin domain; sequence HKAGGANGNG…SLLAFVNSLR (135 aa). Catalysis depends on nucleophile residues cysteine 393 and cysteine 396. Cysteine 393 and cysteine 396 are disulfide-bonded.

This sequence belongs to the APS reductase family. It depends on [4Fe-4S] cluster as a cofactor.

It is found in the plastid. It localises to the chloroplast. The catalysed reaction is glutathione disulfide + sulfite + AMP + 2 H(+) = adenosine 5'-phosphosulfate + 2 glutathione. Its function is as follows. Reduces sulfate for Cys biosynthesis. This chain is Probable 5'-adenylylsulfate reductase 1, chloroplastic (APR1), found in Oryza sativa subsp. japonica (Rice).